A 461-amino-acid chain; its full sequence is Lysosomal dipeptide transporter MFSD1 (461 aa).

Basic and acidic residues predominate over residues 1 to 13; sequence MADREEHQGLLDG. The interval 1–22 is disordered; it reads MADREEHQGLLDGDRDEDEGDK. Residues 10-11 carry the Dileucine internalization motif motif; sequence LL. 10 helical membrane-spanning segments follow: residues 37–57, 81–101, 111–131, 134–154, 264–284, 302–322, 331–351, 359–379, 390–410, and 416–436; these read LLHRILVLIFMCFLGFGSYFC, QLYAWYSWPNVVLCFLGGFLL, TVIFSLFVLVGQIIFAAGALA, FWLMNVGRFVFGIGGESLAVA, LWLIFIICVAYYVAIFPFIGL, AINSVVYIISAPASPLLGFLV, WVMLAVITTLLSHMMLAFTFW, LLGVSYSLLACALWPMVAFVV, FMQSIQNLGLAVMSIAAGSIL, and LFLEVFFIACLCMALLAVVLL.

The protein belongs to the major facilitator superfamily. As to quaternary structure, homodimer. Interacts with lysosomal protein GLMP (via lumenal domain); the interaction starts while both proteins are still in the endoplasmic reticulum and is required for stabilization of MFSD1 in lysosomes but has no direct effect on its targeting to lysosomes or transporter activity.

The protein resides in the lysosome membrane. The catalysed reaction is L-alpha-aminoacyl-L-arginine(out) = L-alpha-aminoacyl-L-arginine(in). It catalyses the reaction L-arginyl-L-alpha-amino acid(out) = L-arginyl-L-alpha-amino acid(in). It carries out the reaction L-arginyl-glycine(out) = L-arginyl-glycine(in). The enzyme catalyses L-alpha-aminoacyl-L-lysine(out) = L-alpha-aminoacyl-L-lysine(in). The catalysed reaction is L-aspartyl-L-lysine(out) = L-aspartyl-L-lysine(in). It catalyses the reaction L-alanyl-L-lysine(out) = L-alanyl-L-lysine(in). It carries out the reaction L-lysyl-L-alpha-amino acid(out) = L-lysyl-L-alpha-amino acid(in). The enzyme catalyses L-lysyl-L-alanine(out) = L-lysyl-L-alanine(in). The catalysed reaction is L-lysyl-L-lysine(out) = L-lysyl-L-lysine(in). It catalyses the reaction L-lysyl-glycine(out) = L-lysyl-glycine(in). It carries out the reaction L-alpha-aminoacyl-L-histidine(out) = L-alpha-aminoacyl-L-histidine(in). The enzyme catalyses L-histidyl-L-alpha-amino acid(out) = L-histidyl-L-alpha-amino acid(in). The catalysed reaction is L-histidyl-glycine(out) = L-histidyl-glycine(in). Functionally, lysosomal dipeptide uniporter that selectively exports lysine, arginine or histidine-containing dipeptides with a net positive charge from the lysosome lumen into the cytosol. Could play a role in a specific type of protein O-glycosylation indirectly regulating macrophages migration and tissue invasion. Also essential for liver homeostasis. The chain is Lysosomal dipeptide transporter MFSD1 (mfsd1) from Danio rerio (Zebrafish).